We begin with the raw amino-acid sequence, 331 residues long: Phenylalanine--tRNA ligase alpha subunit (331 aa).

Mg(2+) is bound at residue Glu256.

It belongs to the class-II aminoacyl-tRNA synthetase family. Phe-tRNA synthetase alpha subunit type 1 subfamily. In terms of assembly, tetramer of two alpha and two beta subunits. It depends on Mg(2+) as a cofactor.

Its subcellular location is the cytoplasm. It carries out the reaction tRNA(Phe) + L-phenylalanine + ATP = L-phenylalanyl-tRNA(Phe) + AMP + diphosphate + H(+). This Colwellia psychrerythraea (strain 34H / ATCC BAA-681) (Vibrio psychroerythus) protein is Phenylalanine--tRNA ligase alpha subunit.